Here is a 544-residue protein sequence, read N- to C-terminus: Chaperonin GroEL 1 (544 aa).

ATP-binding positions include 30–33 (TLGP), 87–91 (DGTTT), Gly-415, 480–482 (NAA), and Asp-496.

This sequence belongs to the chaperonin (HSP60) family. In terms of assembly, forms a cylinder of 14 subunits composed of two heptameric rings stacked back-to-back. Interacts with the co-chaperonin GroES.

Its subcellular location is the cytoplasm. The enzyme catalyses ATP + H2O + a folded polypeptide = ADP + phosphate + an unfolded polypeptide.. Together with its co-chaperonin GroES, plays an essential role in assisting protein folding. The GroEL-GroES system forms a nano-cage that allows encapsulation of the non-native substrate proteins and provides a physical environment optimized to promote and accelerate protein folding. The chain is Chaperonin GroEL 1 from Polaromonas naphthalenivorans (strain CJ2).